The primary structure comprises 1234 residues: Complement factor H (1234 aa).

An N-terminal signal peptide occupies residues 1-18 (MRLSARIIWLILWTVCAA). Sushi domains lie at 19–82 (EDCK…ICRK), 83–143 (KPCG…LCEV), 144–207 (VKCL…RCVE), 208–264 (ILCT…FCEE), 265–322 (KRCS…RCTL), 324–386 (PCEF…VPCV), 387–444 (RKCV…KCIR), 446–507 (KTCS…SCIK), 508–566 (SCDM…SCYE), 567–624 (RECS…TCKG), 627–685 (ASCA…VCIE), 688–745 (RTCG…KCVA), 750–804 (EKCR…NCTS), 806–863 (TSCP…RCIE), 865–933 (IPCS…RCVG), 934–991 (LPCG…KCIK), 992–1050 (TDCD…VCKD), 1051–1109 (NSCV…KCRD), 1112–1170 (GKCG…TCLH), and 1171–1234 (ACVI…PTCV). Disulfide bonds link Cys-21/Cys-66, Cys-52/Cys-80, Cys-85/Cys-129, Cys-114/Cys-141, Cys-146/Cys-192, Cys-178/Cys-205, Cys-210/Cys-251, Cys-237/Cys-262, Cys-267/Cys-309, Cys-294/Cys-320, Cys-325/Cys-374, Cys-357/Cys-385, Cys-389/Cys-431, Cys-416/Cys-442, Cys-448/Cys-494, Cys-477/Cys-505, Cys-509/Cys-553, Cys-536/Cys-564, Cys-569/Cys-610, Cys-597/Cys-622, Cys-629/Cys-672, Cys-658/Cys-683, Cys-690/Cys-732, Cys-718/Cys-743, Cys-752/Cys-791, Cys-780/Cys-802, Cys-808/Cys-850, Cys-836/Cys-861, Cys-867/Cys-920, Cys-906/Cys-931, Cys-936/Cys-978, Cys-964/Cys-989, Cys-994/Cys-1037, Cys-1023/Cys-1048, Cys-1053/Cys-1096, Cys-1082/Cys-1107, Cys-1114/Cys-1157, Cys-1143/Cys-1168, Cys-1172/Cys-1223, and Cys-1206/Cys-1233. 4 N-linked (GlcNAc...) asparagine glycosylation sites follow: Asn-676, Asn-721, Asn-773, and Asn-801. The disordered stretch occupies residues 872 to 896 (TIEHGSINLPRSSEERRDSIESSSH). Residues 883–896 (SSEERRDSIESSSH) show a composition bias toward basic and acidic residues. Residues Asn-1030 and Asn-1061 are each glycosylated (N-linked (GlcNAc...) asparagine). Position 1198 is a phosphoserine (Ser-1198). Asn-1225 is a glycosylation site (N-linked (GlcNAc...) asparagine).

In terms of assembly, homodimer. Also forms homooligomers. Interacts with complement protein C3b; this interaction inhibits complement activation. Interacts with complement protein C3d. Interacts with CR3/ITGAM; this interaction mediates adhesion of neutrophils to pathogens leading to pathogen clearance. Post-translationally, sulfated on tyrosine residues. In terms of tissue distribution, CFH is one of the most abundant complement components in blood where the liver is the major source of CFH protein in vivo. in addition, CFH is secreted by additional cell types including monocytes, fibroblasts, or endothelial cells.

It is found in the secreted. Functionally, glycoprotein that plays an essential role in maintaining a well-balanced immune response by modulating complement activation. Acts as a soluble inhibitor of complement, where its binding to self markers such as glycan structures prevents complement activation and amplification on cell surfaces. Accelerates the decay of the complement alternative pathway (AP) C3 convertase C3bBb, thus preventing local formation of more C3b, the central player of the complement amplification loop. As a cofactor of the serine protease factor I, CFH also regulates proteolytic degradation of already-deposited C3b. In addition, mediates several cellular responses through interaction with specific receptors. For example, interacts with CR3/ITGAM receptor and thereby mediates the adhesion of human neutrophils to different pathogens. In turn, these pathogens are phagocytosed and destroyed. The polypeptide is Complement factor H (Cfh) (Mus musculus (Mouse)).